The sequence spans 138 residues: Small ribosomal subunit protein uS11c (138 aa).

The protein belongs to the universal ribosomal protein uS11 family. In terms of assembly, part of the 30S ribosomal subunit.

The protein resides in the plastid. It is found in the chloroplast. The sequence is that of Small ribosomal subunit protein uS11c from Morus indica (Mulberry).